Reading from the N-terminus, the 100-residue chain is Small ribosomal subunit protein uS14c (100 aa).

It belongs to the universal ribosomal protein uS14 family. In terms of assembly, part of the 30S ribosomal subunit.

The protein localises to the plastid. The protein resides in the chloroplast. Binds 16S rRNA, required for the assembly of 30S particles. In Rhodomonas salina (Cryptomonas salina), this protein is Small ribosomal subunit protein uS14c.